The sequence spans 633 residues: Extracellular metalloproteinase 3 (633 aa).

Positions 1–18 (MHGLLLAGLLALPMNVLA) are cleaved as a signal peptide. Residues 19–246 (HPAEHHASNV…VHNVVDYVAS (228 aa)) constitute a propeptide that is removed on maturation. 2 N-linked (GlcNAc...) asparagine glycosylation sites follow: Asn232 and Asn410. Zn(2+) is bound at residue His429. Glu430 is a catalytic residue. A Zn(2+)-binding site is contributed by His433. 2 N-linked (GlcNAc...) asparagine glycosylation sites follow: Asn480 and Asn622.

Belongs to the peptidase M36 family. Requires Zn(2+) as cofactor.

It localises to the secreted. In terms of biological role, secreted metalloproteinase that allows assimilation of proteinaceous substrates and probably acts as a virulence factor. This chain is Extracellular metalloproteinase 3 (MEP3), found in Arthroderma gypseum (strain ATCC MYA-4604 / CBS 118893) (Microsporum gypseum).